The chain runs to 156 residues: Arginine repressor (156 aa).

The protein belongs to the ArgR family.

The protein localises to the cytoplasm. It participates in amino-acid biosynthesis; L-arginine biosynthesis [regulation]. Functionally, regulates arginine biosynthesis genes. The sequence is that of Arginine repressor from Aeromonas hydrophila subsp. hydrophila (strain ATCC 7966 / DSM 30187 / BCRC 13018 / CCUG 14551 / JCM 1027 / KCTC 2358 / NCIMB 9240 / NCTC 8049).